We begin with the raw amino-acid sequence, 365 residues long: Poly(rC)-binding protein 2 (365 aa).

KH domains are found at residues 13 to 75 and 97 to 162; these read TLTI…FAMI and PVTL…VKQI. Lys-115 participates in a covalent cross-link: Glycyl lysine isopeptide (Lys-Gly) (interchain with G-Cter in SUMO2). Phosphoserine is present on Ser-173. Lys-185 participates in a covalent cross-link: Glycyl lysine isopeptide (Lys-Gly) (interchain with G-Cter in SUMO2). Phosphoserine occurs at positions 189 and 272. Positions 287–351 constitute a KH 3 domain; it reads TTSHELTIPN…ASISLAQYLI (65 aa). Lys-322 is covalently cross-linked (Glycyl lysine isopeptide (Lys-Gly) (interchain with G-Cter in SUMO2)). 2 positions are modified to phosphoserine: Ser-364 and Ser-365.

In terms of assembly, identified in a mRNP complex, at least composed of DHX9, DDX3X, ELAVL1, HNRNPU, IGF2BP1, ILF3, PABPC1, PCBP2, PTBP2, STAU1, STAU2, SYNCRIP and YBX1. Interacts with IFIH1 and RNF135. Interacts with MAVS (via C-terminus) and ITCH (via WW domains). Interacts with CGAS; preventing the formation of liquid-like droplets in which CGAS is activated. Post-translationally, phosphorylated. The non-phosphorylated form(s) exhibited the strongest poly(rC)-binding activity. (Microbial infection) Proteolytically cleaved by picornavirus proteinase 3CD. In terms of tissue distribution, detected in all tissues examined.

The protein resides in the nucleus. Its subcellular location is the cytoplasm. In terms of biological role, single-stranded nucleic acid binding protein that binds preferentially to oligo dC. Major cellular poly(rC)-binding protein. Also binds poly(rU). Acts as a negative regulator of antiviral signaling. Negatively regulates cellular antiviral responses mediated by MAVS signaling. It acts as an adapter between MAVS and the E3 ubiquitin ligase ITCH, therefore triggering MAVS ubiquitination and degradation. Negativeley regulates the cGAS-STING pathway via interaction with CGAS, preventing the formation of liquid-like droplets in which CGAS is activated. Together with PCBP1, required for erythropoiesis, possibly by regulating mRNA splicing. Its function is as follows. (Microbial infection) In case of infection by poliovirus, binds to the viral internal ribosome entry site (IRES) and stimulates the IRES-mediated translation. Also plays a role in initiation of viral RNA replication in concert with the viral protein 3CD. The polypeptide is Poly(rC)-binding protein 2 (Homo sapiens (Human)).